The sequence spans 67 residues: ATP synthase F(0) complex subunit 8 (67 aa).

A helical transmembrane segment spans residues 8 to 24 (TWFITITSMIMTLFILF). Lysine 54 carries the post-translational modification N6-acetyllysine; alternate. Lysine 54 carries the N6-succinyllysine; alternate modification. Lysine 57 bears the N6-acetyllysine mark.

The protein belongs to the ATPase protein 8 family. Component of the ATP synthase complex composed at least of ATP5F1A/subunit alpha, ATP5F1B/subunit beta, ATP5MC1/subunit c (homooctomer), MT-ATP6/subunit a, MT-ATP8/subunit 8, ATP5ME/subunit e, ATP5MF/subunit f, ATP5MG/subunit g, ATP5MK/subunit k, ATP5MJ/subunit j, ATP5F1C/subunit gamma, ATP5F1D/subunit delta, ATP5F1E/subunit epsilon, ATP5PF/subunit F6, ATP5PB/subunit b, ATP5PD/subunit d, ATP5PO/subunit OSCP. ATP synthase complex consists of a soluble F(1) head domain (subunits alpha(3) and beta(3)) - the catalytic core - and a membrane F(0) domain - the membrane proton channel (subunits c, a, 8, e, f, g, k and j). These two domains are linked by a central stalk (subunits gamma, delta, and epsilon) rotating inside the F1 region and a stationary peripheral stalk (subunits F6, b, d, and OSCP). Interacts with PRICKLE3.

It localises to the mitochondrion membrane. In terms of biological role, subunit 8, of the mitochondrial membrane ATP synthase complex (F(1)F(0) ATP synthase or Complex V) that produces ATP from ADP in the presence of a proton gradient across the membrane which is generated by electron transport complexes of the respiratory chain. ATP synthase complex consist of a soluble F(1) head domain - the catalytic core - and a membrane F(1) domain - the membrane proton channel. These two domains are linked by a central stalk rotating inside the F(1) region and a stationary peripheral stalk. During catalysis, ATP synthesis in the catalytic domain of F(1) is coupled via a rotary mechanism of the central stalk subunits to proton translocation. In vivo, can only synthesize ATP although its ATP hydrolase activity can be activated artificially in vitro. Part of the complex F(0) domain. This chain is ATP synthase F(0) complex subunit 8, found in Sus scrofa (Pig).